We begin with the raw amino-acid sequence, 156 residues long: Small ribosomal subunit protein uS17A (156 aa).

S2 carries the post-translational modification N-acetylserine. Glycyl lysine isopeptide (Lys-Gly) (interchain with G-Cter in ubiquitin) cross-links involve residues K15, K46, K56, K57, K79, K96, K105, K133, K141, and K148.

It belongs to the universal ribosomal protein uS17 family. In terms of assembly, component of the small ribosomal subunit (SSU). Mature yeast ribosomes consist of a small (40S) and a large (60S) subunit. The 40S small subunit contains 1 molecule of ribosomal RNA (18S rRNA) and 33 different proteins (encoded by 57 genes). The large 60S subunit contains 3 rRNA molecules (25S, 5.8S and 5S rRNA) and 46 different proteins (encoded by 81 genes). Post-translationally, N-terminally acetylated by acetyltransferase NatA.

It is found in the cytoplasm. Functionally, component of the ribosome, a large ribonucleoprotein complex responsible for the synthesis of proteins in the cell. The small ribosomal subunit (SSU) binds messenger RNAs (mRNAs) and translates the encoded message by selecting cognate aminoacyl-transfer RNA (tRNA) molecules. The large subunit (LSU) contains the ribosomal catalytic site termed the peptidyl transferase center (PTC), which catalyzes the formation of peptide bonds, thereby polymerizing the amino acids delivered by tRNAs into a polypeptide chain. The nascent polypeptides leave the ribosome through a tunnel in the LSU and interact with protein factors that function in enzymatic processing, targeting, and the membrane insertion of nascent chains at the exit of the ribosomal tunnel. This chain is Small ribosomal subunit protein uS17A, found in Saccharomyces cerevisiae (strain ATCC 204508 / S288c) (Baker's yeast).